The following is an 838-amino-acid chain: Ribonucleoside-diphosphate reductase large subunit (838 aa).

The region spanning 6 to 97 (KLVTKRDGSV…VTALHKTTTE (92 aa)) is the ATP-cone domain. ATP contacts are provided by residues 10–11 (KR), 16–22 (EPYDEKV), Thr-58, and Asp-62. Ser-227 lines the GDP pocket. Cys-228 and Cys-454 form a disulfide bridge. DTTP-binding positions include 236-238 (DSI), Lys-253, Arg-266, and 273-274 (AG). Asn-437 lines the GDP pocket. Asn-437 serves as the catalytic Proton acceptor. The active-site Cysteine radical intermediate is the Cys-439. GDP-binding positions include Glu-441 and 626-629 (TAST). Glu-441 functions as the Proton acceptor in the catalytic mechanism. The segment covering 780–794 (KELPKPDKQSKEEVH) has biased composition (basic and acidic residues). Positions 780–838 (KELPKPDKQSKEEVHGSVGRGKRKRVGEKPTANHSNAGAPNLNGPPDTDGDGGCLNCGS) are disordered.

The protein belongs to the ribonucleoside diphosphate reductase large chain family. In terms of assembly, heterodimer of a large and a small subunit.

It catalyses the reaction a 2'-deoxyribonucleoside 5'-diphosphate + [thioredoxin]-disulfide + H2O = a ribonucleoside 5'-diphosphate + [thioredoxin]-dithiol. The enzyme catalyses dCDP + [thioredoxin]-disulfide + H2O = CDP + [thioredoxin]-dithiol. Its activity is regulated as follows. Under complex allosteric control mediated by deoxynucleoside triphosphates and ATP binding to separate specificity and activation sites on the large subunit. The type of nucleotide bound at the specificity site determines substrate preference. It seems probable that ATP makes the enzyme reduce CDP and UDP, dGTP favors ADP reduction and dTTP favors GDP reduction. Stimulated by ATP and inhibited by dATP binding to the activity site. Functionally, provides the precursors necessary for DNA synthesis. Catalyzes the rate limiting step in the de novo synthesis of deoxyribonucleotides by directly reducing ribonucleotides to the corresponding deoxyribonucleotides. The polypeptide is Ribonucleoside-diphosphate reductase large subunit (RNR1) (Trypanosoma brucei brucei).